The chain runs to 319 residues: Free fatty acid receptor 3 (319 aa).

Residues 1–15 (MDTSFFPGNHWLFFS) are Extracellular-facing. Residues 16 to 36 (VDLLVFLVGLPLNVMALVVFV) form a helical membrane-spanning segment. Topologically, residues 37 to 43 (NKLRRRP) are cytoplasmic. Residues 44–64 (VAVDLLLLNLTISDLLLLLFL) form a helical membrane-spanning segment. Residues 65–98 (PFRIVEAACGMKWILPFIFCPLSGFLFFTTIYLT) are Extracellular-facing. Cysteine 84 and cysteine 165 are disulfide-bonded. The chain crosses the membrane as a helical span at residues 99–119 (SLFLMTVSIERFLSVAYPLWY). Over 120–127 (KTRPRLAQ) the chain is Cytoplasmic. The chain crosses the membrane as a helical span at residues 128-148 (AGLVSGICWFLASAHCSVIYV). At 149 to 183 (TEYWGNATYSQGTNGTCYLEFREDQLAILLPVRLE) the chain is on the extracellular side. The helical transmembrane segment at 184-206 (MAVVLFMVPLCITSYCYSRLVWI) threads the bilayer. The Cytoplasmic portion of the chain corresponds to 207 to 218 (LSQGASRRRRKR). A helical membrane pass occupies residues 219–239 (VMGLLVATLLIFFVCFGPYNM). At 240-254 (SHVVGYVRGESPTWR) the chain is on the extracellular side. A helical transmembrane segment spans residues 255-275 (SYVLLLSTLNSCIDPLVFYFS). Topologically, residues 276–319 (SSKFQADFHQLLSRLIRACVPWTQEVSLELKVKNGEEPSKECPS) are cytoplasmic.

It belongs to the G-protein coupled receptor 1 family. As to expression, expressed in the sympathetic nervous system.

It is found in the cell membrane. Its function is as follows. G protein-coupled receptor that is activated by a major product of dietary fiber digestion, the short chain fatty acids (SCFAs), and that plays a role in the regulation of whole-body energy homeostasis and in intestinal immunity. In omnivorous mammals, the short chain fatty acids acetate, propionate and butyrate are produced primarily by the gut microbiome that metabolizes dietary fibers. SCFAs serve as a source of energy but also act as signaling molecules. That G protein-coupled receptor is probably coupled to the pertussis toxin-sensitive, G(i/o)-alpha family of G proteins. Its activation results in the formation of inositol 1,4,5-trisphosphate, the mobilization of intracellular calcium, the phosphorylation of the MAPK3/ERK1 and MAPK1/ERK2 kinases and the inhibition of intracellular cAMP accumulation. Activated by SCFAs and by beta-hydroxybutyrate, a ketone body produced by the liver upon starvation, it inhibits N-type calcium channels and modulates the activity of sympathetic neurons through a signaling cascade involving the beta and gamma subunits of its coupled G protein, phospholipase C and MAP kinases. Thereby, it may regulate energy expenditure through the control of the sympathetic nervous system that controls for instance heart rate. Upon activation by SCFAs accumulating in the intestine, it may also signal to the brain via neural circuits which in turn would regulate intestinal gluconeogenesis. May also control the production of hormones involved in whole-body energy homeostasis. May for instance, regulate blood pressure through renin secretion. May also regulate secretion of the PYY peptide by enteroendocrine cells and control gut motility, intestinal transit rate, and the harvesting of energy from SCFAs produced by gut microbiota. May also indirectly regulate the production of LEP/Leptin, a hormone acting on the CNS to inhibit food intake, in response to the presence of short-chain fatty acids in the intestine. Finally, may also play a role in glucose homeostasis. Besides its role in energy homeostasis, may play a role in intestinal immunity. May mediate the activation of the inflammatory and immune response by SCFAs in the gut, regulating the rapid production of chemokines and cytokines by intestinal epithelial cells. The chain is Free fatty acid receptor 3 (Ffar3) from Rattus norvegicus (Rat).